A 100-amino-acid chain; its full sequence is Large ribosomal subunit protein bL28 (100 aa).

Belongs to the bacterial ribosomal protein bL28 family.

This Methylobacterium radiotolerans (strain ATCC 27329 / DSM 1819 / JCM 2831 / NBRC 15690 / NCIMB 10815 / 0-1) protein is Large ribosomal subunit protein bL28.